A 542-amino-acid chain; its full sequence is Organic anion transporter 3 (542 aa).

Residues 1–9 (MTFSEILDR) lie on the Cytoplasmic side of the membrane. The residue at position 4 (serine 4) is a Phosphoserine. Residues 10 to 30 (VGSMGPFQFLHVALLGFPILG) form a helical membrane-spanning segment. Over 31–123 (MANHNLLQIF…LVCSSNKLKE (93 aa)) the chain is Extracellular. Asparagine 86 carries an N-linked (GlcNAc...) asparagine glycan. Residues 124-144 (MAQSIFMAGILIGGLVLGDLS) form a helical membrane-spanning segment. Residues 145–150 (DRFGRK) lie on the Cytoplasmic side of the membrane. Residues 151–171 (PILTCCYLLLAASGSSTAFSP) traverse the membrane as a helical segment. Residues 172 to 176 (TLPIY) lie on the Extracellular side of the membrane. The helical transmembrane segment at 177–197 (MVFRFLCGFSISGISLSTVIL) threads the bilayer. Over 198 to 212 (NVEWVPTKMRAITST) the chain is Cytoplasmic. The chain crosses the membrane as a helical span at residues 213 to 233 (AIGYCYTIGQFILPGLAYAIP). At 234 to 236 (QWR) the chain is on the extracellular side. Residues 237–257 (WLQLTVSVPYFIFSLLSWWIP) form a helical membrane-spanning segment. The Cytoplasmic segment spans residues 258–327 (ESIRWLVLAG…FRTPILRRVT (70 aa)). A helical membrane pass occupies residues 328 to 348 (LCLSLAWFATGFAYYSLAMGV). Topologically, residues 349-354 (EEFGVN) are extracellular. Residues 355-375 (IYILQIIFGGVDIPAKFITIL) traverse the membrane as a helical segment. The Cytoplasmic segment spans residues 376–389 (SLSYLGRHITQGAA). The helical transmembrane segment at 390 to 410 (LILAGAAILSLIFVPMDMSLL) threads the bilayer. Arginine 411 is a topological domain (extracellular). A helical transmembrane segment spans residues 412-432 (TILAVFGKGCLSGSFSCLFLY). Topologically, residues 433 to 471 (TSELFPTVIRQTGMGISNVWARVGSMISPLVKITGEIQP) are cytoplasmic. The helical transmembrane segment at 472-492 (FIPNIIYGTVALLGGSAALFL) threads the bilayer. At 493-542 (PETLNQPLPETLEDMENWFLQSKKLKQEPEAEKASQRIPLQPSGPGVDRS) the chain is on the extracellular side. The segment covering 518 to 527 (KQEPEAEKAS) has biased composition (basic and acidic residues). The disordered stretch occupies residues 518-542 (KQEPEAEKASQRIPLQPSGPGVDRS).

This sequence belongs to the major facilitator (TC 2.A.1) superfamily. Organic cation transporter (TC 2.A.1.19) family.

The protein resides in the basolateral cell membrane. The catalysed reaction is estrone 3-sulfate(out) + glutarate(in) = estrone 3-sulfate(in) + glutarate(out). It catalyses the reaction estrone 3-sulfate(in) + 2-oxoglutarate(out) = estrone 3-sulfate(out) + 2-oxoglutarate(in). The enzyme catalyses glutarate(in) + 2-oxoglutarate(out) = glutarate(out) + 2-oxoglutarate(in). It carries out the reaction urate(in) + 2-oxoglutarate(out) = urate(out) + 2-oxoglutarate(in). The catalysed reaction is taurocholate(out) + glutarate(in) = taurocholate(in) + glutarate(out). It catalyses the reaction dehydroepiandrosterone 3-sulfate(out) + glutarate(in) = dehydroepiandrosterone 3-sulfate(in) + glutarate(out). The enzyme catalyses prostaglandin F2alpha(out) + glutarate(in) = prostaglandin F2alpha(in) + glutarate(out). It carries out the reaction prostaglandin F2alpha(out) + 2-oxoglutarate(in) = prostaglandin F2alpha(in) + 2-oxoglutarate(out). The catalysed reaction is (R)-carnitine(out) + 2-oxoglutarate(in) = (R)-carnitine(in) + 2-oxoglutarate(out). It catalyses the reaction glutarate(in) + (R)-carnitine(out) = glutarate(out) + (R)-carnitine(in). The enzyme catalyses prostaglandin E2(out) + 2-oxoglutarate(in) = prostaglandin E2(in) + 2-oxoglutarate(out). It carries out the reaction prostaglandin E2(out) + glutarate(in) = prostaglandin E2(in) + glutarate(out). The catalysed reaction is urate(in) + glutarate(out) = urate(out) + glutarate(in). It catalyses the reaction taurocholate(out) + 2-oxoglutarate(in) = taurocholate(in) + 2-oxoglutarate(out). The enzyme catalyses dehydroepiandrosterone 3-sulfate(out) + 2-oxoglutarate(in) = dehydroepiandrosterone 3-sulfate(in) + 2-oxoglutarate(out). It carries out the reaction kynurenate(out) + a dicarboxylate(in) = kynurenate(in) + a dicarboxylate(out). The catalysed reaction is (indol-3-yl)acetate(out) + a dicarboxylate(in) = (indol-3-yl)acetate(in) + a dicarboxylate(out). It catalyses the reaction indoxyl sulfate(out) + a dicarboxylate(in) = indoxyl sulfate(in) + a dicarboxylate(out). The enzyme catalyses N-benzoylglycine(out) + a dicarboxylate(in) = N-benzoylglycine(in) + a dicarboxylate(out). It carries out the reaction 3-carboxy-4-methyl-5-propyl-2-furanpropanoate(out) + a dicarboxylate(in) = 3-carboxy-4-methyl-5-propyl-2-furanpropanoate(in) + a dicarboxylate(out). The catalysed reaction is (6R)-L-erythro-5,6,7,8-tetrahydrobiopterin(out) + a dicarboxylate(in) = (6R)-L-erythro-5,6,7,8-tetrahydrobiopterin(in) + a dicarboxylate(out). It catalyses the reaction L-erythro-7,8-dihydrobiopterin(out) + a dicarboxylate(in) = L-erythro-7,8-dihydrobiopterin(in) + a dicarboxylate(out). The enzyme catalyses L-sepiapterin(out) + a dicarboxylate(in) = L-sepiapterin(in) + a dicarboxylate(out). Functions as an organic anion/dicarboxylate exchanger that couples organic anion uptake indirectly to the sodium gradient. Transports organic anions such as estrone 3-sulfate (E1S) and urate in exchange for dicarboxylates such as glutarate or ketoglutarate (2-oxoglutarate). Plays an important role in the excretion of endogenous and exogenous organic anions, especially from the kidney and the brain. E1S transport is pH- and chloride-dependent and may also involve E1S/cGMP exchange. Responsible for the transport of prostaglandin E2 (PGE2) and prostaglandin F2(alpha) (PGF2(alpha)) in the basolateral side of the renal tubule. Involved in the transport of neuroactive tryptophan metabolites kynurenate and xanthurenate. Functions as a biopterin transporters involved in the uptake and the secretion of coenzymes tetrahydrobiopterin (BH4), dihydrobiopterin (BH2) and sepiapterin to urine, thereby determining baseline levels of blood biopterins. May be involved in the basolateral transport of steviol, a metabolite of the popular sugar substitute stevioside. May participate in the detoxification/ renal excretion of drugs and xenobiotics, such as the histamine H(2)-receptor antagonists fexofenadine and cimetidine, the antibiotic benzylpenicillin (PCG), the anionic herbicide 2,4-dichloro-phenoxyacetate (2,4-D), the diagnostic agent p-aminohippurate (PAH), the antiviral acyclovir (ACV), and the mycotoxin ochratoxin (OTA), by transporting these exogenous organic anions across the cell membrane in exchange for dicarboxylates such as 2-oxoglutarate. Contributes to the renal uptake of potent uremic toxins (indoxyl sulfate (IS), indole acetate (IA), hippurate/N-benzoylglycine (HA) and 3-carboxy-4-methyl-5-propyl-2-furanpropionate (CMPF)), pravastatin, PCG, E1S and dehydroepiandrosterone sulfate (DHEAS), and is partly involved in the renal uptake of temocaprilat (an angiotensin-converting enzyme (ACE) inhibitor). May contribute to the release of cortisol in the adrenals. Involved in one of the detoxification systems on the choroid plexus (CP), removes substrates such as E1S or taurocholate (TC), PCG, 2,4-D and PAH, from the cerebrospinal fluid (CSF) to the blood for eventual excretion in urine and bile. Also contributes to the uptake of several other organic compounds such as the prostanoids prostaglandin E(2) and prostaglandin F(2-alpha), L-carnitine, and the therapeutic drugs allopurinol, 6-mercaptopurine (6-MP) and 5-fluorouracil (5-FU). Mediates the transport of PAH, PCG, and the statins pravastatin and pitavastatin, from the cerebrum into the blood circulation across the blood-brain barrier (BBB). In summary, plays a role in the efflux of drugs and xenobiotics, helping reduce their undesired toxicological effects on the body. The protein is Organic anion transporter 3 (SLC22A8) of Oryctolagus cuniculus (Rabbit).